We begin with the raw amino-acid sequence, 142 residues long: Large ribosomal subunit protein uL11 (142 aa).

This sequence belongs to the universal ribosomal protein uL11 family. Part of the ribosomal stalk of the 50S ribosomal subunit. Interacts with L10 and the large rRNA to form the base of the stalk. L10 forms an elongated spine to which L12 dimers bind in a sequential fashion forming a multimeric L10(L12)X complex. In terms of processing, one or more lysine residues are methylated.

Forms part of the ribosomal stalk which helps the ribosome interact with GTP-bound translation factors. This is Large ribosomal subunit protein uL11 from Shewanella pealeana (strain ATCC 700345 / ANG-SQ1).